Reading from the N-terminus, the 147-residue chain is Large ribosomal subunit protein bL9 (147 aa).

The protein belongs to the bacterial ribosomal protein bL9 family.

Binds to the 23S rRNA. The polypeptide is Large ribosomal subunit protein bL9 (Geotalea daltonii (strain DSM 22248 / JCM 15807 / FRC-32) (Geobacter daltonii)).